We begin with the raw amino-acid sequence, 220 residues long: MAKNRFNQHWLHDHINDPYVKMAQREGYRARAAYKLKEIDEQDKLIRPGQVIVDLGATPGSWSQYARNKLAQGKKRDTEREGGIDGTIVALDILPMEPIADVHFLQGDFREDEVLHQLEEVLEGRDVDLVISDMAPNLSGVASADAARIEHLCDLALEFAQNHLKPDGALLVKCFHGSGYSQIVEKFKQQFKTVAPRKPKASRDKSSETFILGRHLKRPR.

Gly-60, Trp-62, Asp-92, Asp-108, and Asp-133 together coordinate S-adenosyl-L-methionine. Lys-173 (proton acceptor) is an active-site residue. The interval 195-220 (APRKPKASRDKSSETFILGRHLKRPR) is disordered.

This sequence belongs to the class I-like SAM-binding methyltransferase superfamily. RNA methyltransferase RlmE family.

The protein resides in the cytoplasm. The enzyme catalyses uridine(2552) in 23S rRNA + S-adenosyl-L-methionine = 2'-O-methyluridine(2552) in 23S rRNA + S-adenosyl-L-homocysteine + H(+). In terms of biological role, specifically methylates the uridine in position 2552 of 23S rRNA at the 2'-O position of the ribose in the fully assembled 50S ribosomal subunit. The polypeptide is Ribosomal RNA large subunit methyltransferase E (Burkholderia lata (strain ATCC 17760 / DSM 23089 / LMG 22485 / NCIMB 9086 / R18194 / 383)).